The chain runs to 605 residues: Probable potassium transport system protein Kup 3 (605 aa).

12 helical membrane passes run 16 to 36 (ALGL…TVIF), 49 to 69 (ILSL…AWLA), 97 to 117 (VAFA…DAVI), 138 to 158 (GLST…LFSV), 170 to 190 (FGPI…VSAF), 212 to 232 (GLAG…GEAL), 247 to 267 (AWHF…VFAI), 287 to 307 (LYIP…QAII), 339 to 359 (IYLG…MLVF), 368 to 388 (AYGM…IIVF), 397 to 417 (ALVA…TFSK), and 418 to 438 (LPHG…TIII).

This sequence belongs to the HAK/KUP transporter (TC 2.A.72) family.

The protein localises to the cell inner membrane. It carries out the reaction K(+)(in) + H(+)(in) = K(+)(out) + H(+)(out). Functionally, transport of potassium into the cell. Likely operates as a K(+):H(+) symporter. The chain is Probable potassium transport system protein Kup 3 from Geobacter sulfurreducens (strain ATCC 51573 / DSM 12127 / PCA).